A 470-amino-acid polypeptide reads, in one-letter code: Serine hydroxymethyltransferase 5 (470 aa).

At Lys-244 the chain carries N6-(pyridoxal phosphate)lysine.

This sequence belongs to the SHMT family. Homotetramer. The cofactor is pyridoxal 5'-phosphate.

It is found in the cytoplasm. It catalyses the reaction (6R)-5,10-methylene-5,6,7,8-tetrahydrofolate + glycine + H2O = (6S)-5,6,7,8-tetrahydrofolate + L-serine. It participates in one-carbon metabolism; tetrahydrofolate interconversion. In terms of biological role, catalyzes the interconversion of serine and glycine. The polypeptide is Serine hydroxymethyltransferase 5 (SHM5) (Arabidopsis thaliana (Mouse-ear cress)).